Here is a 222-residue protein sequence, read N- to C-terminus: Germin-like protein subfamily 1 member 5 (222 aa).

The signal sequence occupies residues 1–24 (MKGLLHFLLAKIILLALASSFVYC). Cys34 and Cys50 are disulfide-bonded. 2 N-linked (GlcNAc...) asparagine glycosylation sites follow: Asn38 and Asn71. A Cupin type-1 domain is found at 64–215 (SGLNVPGNTS…AFALDFNKVK (152 aa)). The Mn(2+) site is built by His112, His114, and Glu119. A glycan (N-linked (GlcNAc...) asparagine) is linked at Asn139. Residue His163 coordinates Mn(2+).

The protein belongs to the germin family. In terms of assembly, oligomer (believed to be a pentamer but probably hexamer).

The protein resides in the secreted. Its subcellular location is the extracellular space. The protein localises to the apoplast. May play a role in plant defense. Probably has no oxalate oxidase activity even if the active site is conserved. This is Germin-like protein subfamily 1 member 5 from Arabidopsis thaliana (Mouse-ear cress).